The sequence spans 361 residues: Phosphate acyltransferase (361 aa).

This sequence belongs to the PlsX family. As to quaternary structure, homodimer. Probably interacts with PlsY.

The protein localises to the cytoplasm. The enzyme catalyses a fatty acyl-[ACP] + phosphate = an acyl phosphate + holo-[ACP]. Its pathway is lipid metabolism; phospholipid metabolism. Its function is as follows. Catalyzes the reversible formation of acyl-phosphate (acyl-PO(4)) from acyl-[acyl-carrier-protein] (acyl-ACP). This enzyme utilizes acyl-ACP as fatty acyl donor, but not acyl-CoA. The polypeptide is Phosphate acyltransferase (Anaeromyxobacter dehalogenans (strain 2CP-C)).